We begin with the raw amino-acid sequence, 567 residues long: Arginine--tRNA ligase (567 aa).

The 'HIGH' region motif lies at 121 to 131; sequence ANPNGPLHVGH.

Belongs to the class-I aminoacyl-tRNA synthetase family.

The protein resides in the cytoplasm. The enzyme catalyses tRNA(Arg) + L-arginine + ATP = L-arginyl-tRNA(Arg) + AMP + diphosphate. The chain is Arginine--tRNA ligase from Methanococcoides burtonii (strain DSM 6242 / NBRC 107633 / OCM 468 / ACE-M).